The sequence spans 128 residues: Holin-like protein CidA (128 aa).

3 consecutive transmembrane segments (helical) span residues 23–43 (LIVEVLHINIPGSILGIIVIF), 58–78 (IGALWLLAELLLFFVPSAVGI), and 84–104 (ILAEFGTSIILVVLISTFVVM).

Belongs to the CidA/LrgA family. CidA subfamily.

Its subcellular location is the cell membrane. In terms of biological role, increases the activity of extracellular murein hydrolases possibly by mediating their export via hole formation. Inhibited by the antiholin-like proteins LrgAB. In an unstressed cell, the LrgAB products probably inhibit the function of the CidA protein. When a cell is stressed by the addition of antibiotics or by other factors in the environment, CidA possibly oligomerizes within the bacterial cell membrane, creating lesions that disrupt the proton motive force, which in turn results in loss of cell viability. These lesions are also hypothesized to regulate the subsequent cell lysis by either allowing the murein hydrolases access to the cell wall substrate and/or regulating their activity by a possible change in the cell wall pH that results from loss of membrane potential. The protein is Holin-like protein CidA of Bacillus licheniformis (strain ATCC 14580 / DSM 13 / JCM 2505 / CCUG 7422 / NBRC 12200 / NCIMB 9375 / NCTC 10341 / NRRL NRS-1264 / Gibson 46).